We begin with the raw amino-acid sequence, 1100 residues long: Collagen alpha-2(I) chain (1100 aa).

Residues 1-982 form a disordered region; it reads QYDGVKAPDP…PGPAGGGYDV (982 aa). Composition is skewed to low complexity over residues 122-170, 200-209, and 216-237; these read EPGA…AAGP, EPGPNGAVGP, and PGNN…AGAP. Positions 239 to 249 are enriched in pro residues; it reads FPGPRGGPGPQ. Low complexity predominate over residues 251–261; that stretch reads PQGAAGQRGLA. Residues 268–277 are compositionally biased toward gly residues; sequence GVKGDGGPKG. Low complexity-rich tracts occupy residues 333-352, 358-385, 435-448, and 460-472; these read MPGA…PGDA, SGPA…AGPA, APGP…TGAT, and QGAS…QGLP. The segment covering 473 to 482 has biased composition (gly residues); it reads GPAGGAGEAG. Residues 507 to 517 are compositionally biased toward low complexity; it reads NPGAAGASGPQ. The span at 530–557 shows a compositional bias: gly residues; sequence GTDGGKGEPGAAGAAGGPGHQGPGGMPG. Positions 568 to 579 are enriched in basic and acidic residues; it reads KGEKGEGGHRGP. Positions 633 to 646 are enriched in low complexity; the sequence is PAGAPGFAGPPGAD. Residues 656 to 665 are compositionally biased toward gly residues; the sequence is GPSGGKGESG. Low complexity-rich tracts occupy residues 666–691, 702–729, and 757–775; these read PSGP…TGAR, FPGA…PAGK, and SGEK…LGLQ. The segment covering 788-797 has biased composition (gly residues); the sequence is GSPGGAGAVG. Composition is skewed to low complexity over residues 798 to 820 and 854 to 866; these read EAGR…LGLP and AGPT…PGNR. The span at 867–876 shows a compositional bias: gly residues; the sequence is GESGPGGAAG. Low complexity predominate over residues 877 to 892; the sequence is AVGPAGARGAAGPSGP. Over residues 893 to 907 the composition is skewed to basic and acidic residues; it reads RGEKGVAGEKGERGM. Residues 916-935 show a composition bias toward low complexity; that stretch reads LQGMPGPSGPSGDTGSAGPN. The region spanning 1071 to 1100 is the Fibrillar collagen NC1 domain; sequence TRLPLLDLAPLDLGGADQEFGLDLGPVCFK.

The protein belongs to the fibrillar collagen family.

It localises to the secreted. It is found in the extracellular space. The protein resides in the extracellular matrix. This is Collagen alpha-2(I) chain from Epinephelus caninus (Dogtooth grouper).